A 152-amino-acid polypeptide reads, in one-letter code: Bacchus (152 aa).

Positions 29–41 (DLKAKAAAEDKAA) are enriched in basic and acidic residues. Positions 29-152 (DLKAKAAAED…DDGSGSDDQA (124 aa)) are disordered. A compositionally biased stretch (low complexity) spans 42-51 (AADAAGDAAD). Basic and acidic residues predominate over residues 72–89 (ESVKGTKRPAEAKSAESK). The span at 99–152 (GDSDEEEALEEIIEGDSEIESDEYDIPYDGEEDDIECDDDDDDNDDGSGSDDQA) shows a compositional bias: acidic residues.

As to expression, expressed in the brain.

The protein localises to the nucleus. Its function is as follows. Negatively regulates tyramine beta-hydroxylase tbh and thus the conversion of tyramine (TA) to octopamine (OA). In tyrosine decarboxylase 2 (Tdc2) neurons, acts in an amine-mediated signaling pathway to negatively regulate acute ethanol sensitivity probably via tbh-mediated depletion of TA. The protein is Bacchus of Drosophila melanogaster (Fruit fly).